The primary structure comprises 161 residues: Nucleotide-binding protein H16_A3060 (161 aa).

It belongs to the YajQ family.

Its function is as follows. Nucleotide-binding protein. The polypeptide is Nucleotide-binding protein H16_A3060 (Cupriavidus necator (strain ATCC 17699 / DSM 428 / KCTC 22496 / NCIMB 10442 / H16 / Stanier 337) (Ralstonia eutropha)).